The following is a 192-amino-acid chain: Guanylate kinase (192 aa).

The region spanning 7–185 (GLIIILSSPS…TLKKIHEIIV (179 aa)) is the Guanylate kinase-like domain. 14 to 21 (SPSGTGKS) is a binding site for ATP.

It belongs to the guanylate kinase family.

It is found in the cytoplasm. The catalysed reaction is GMP + ATP = GDP + ADP. Functionally, essential for recycling GMP and indirectly, cGMP. This Rickettsia felis (strain ATCC VR-1525 / URRWXCal2) (Rickettsia azadi) protein is Guanylate kinase.